The primary structure comprises 341 residues: MGELMAFLLPLIIVLMVKHSDSRTHSLRYFRLGVSDPIHGVPEFISVGYVDSHPITTYDSVTRQKEPRAPWMAENLAPDHWERYTQLLRGWQQMFKVELKRLQRHYNHSGSHTYQRMIGCELLEDGSTTGFLQYAYDGQDFLIFNKDTLSWLAVDNVAHTIKQAWEANQHELLYQKNWLEEECIAWLKRFLEYGKDILQRTEPPLVRVNRKETFPGVTALFCKAHGFYPPEIYMTWMKNGEEIVQEIDYGDILPSGDGTYQTWASVELDPQSSNLYSCHVEHCGVHMVLQVPQESETIPLVMKAVSGSIVLVIVLAGVGVLVWRRRPREQNGAIYLPTPDR.

The signal sequence occupies residues Met-1–Ser-22. Residues Arg-23–Ser-109 are alpha-1. Residues Arg-23–Thr-201 are antigen-binding cleft. The Extracellular portion of the chain corresponds to Arg-23 to Met-302. 8-(9H-purin-6-yl)-2-oxa-8-azabicyclo[3.3.1]nona-3,6-diene-4,6-dicarbaldehyde is bound by residues Tyr-29 and Arg-31. 5-(2-oxoethylideneamino)-6-(D-ribitylamino)uracil contacts are provided by Arg-31, Ser-46, and Lys-65. Residues Arg-31, Ser-46, and Lys-65 each contribute to the 5-(2-oxopropylideneamino)-6-(D-ribitylamino)uracil site. 7-hydroxy-6-methyl-8-(1-D-ribityl)lumazine-binding residues include Arg-31, Ser-46, and Lys-65. 8-(9H-purin-6-yl)-2-oxa-8-azabicyclo[3.3.1]nona-3,6-diene-4,6-dicarbaldehyde contacts are provided by Lys-65 and His-80. Lys-65 is a binding site for 2-amino-4-oxopteridine-6-carbaldehyde. Lys-65 serves as a coordination point for pyridoxal. An N-linked (GlcNAc...) asparagine glycan is attached at Asn-107. Residues Gly-110–Thr-201 form an alpha-2 region. Residue Arg-116 coordinates 8-(9H-purin-6-yl)-2-oxa-8-azabicyclo[3.3.1]nona-3,6-diene-4,6-dicarbaldehyde. Residues Arg-116, Tyr-174, and Gln-175 each coordinate 5-(2-oxoethylideneamino)-6-(D-ribitylamino)uracil. Arg-116, Tyr-174, and Gln-175 together coordinate 5-(2-oxopropylideneamino)-6-(D-ribitylamino)uracil. 7-hydroxy-6-methyl-8-(1-D-ribityl)lumazine-binding residues include Arg-116, Tyr-174, and Gln-175. Disulfide bonds link Cys-120–Cys-183 and Cys-222–Cys-278. Residues Glu-202 to Gln-293 are alpha-3. One can recognise an Ig-like C1-type domain in the interval Pro-203–Pro-299. Residues Glu-294–Met-302 form a connecting peptide region. A helical membrane pass occupies residues Lys-303 to Trp-323. Over Arg-324–Arg-341 the chain is Cytoplasmic.

It belongs to the MHC class I family. Heterotrimer that consists of MR1, B2M and metabolite antigen. Major classes of metabolite ligands presented by MR1 include riboflavin-related antigens, pyrimidines and ribityl lumazines, nucleobase adducts and folate derivatives. Forms reversible covalent Schiff base complexes with microbial pyrimidine-based metabolite, which serves as a molecular switch triggering complete folding, stable association with B2M and translocation of the ternary complex from endoplasmic reticulum to the plasma membrane. Alternatively, forms non-Schiff base complexes with ribityl lumazines. On antigen-presenting cells, the ternary complex interacts with TCR on MR1-restricted T cells. Interacts with TAPBP and TAPBPL chaperones in the endoplasmic reticulum. TAPBP associated or not with MHC class I peptide loading complex binds ligand-free MR1 or MR1-B2M complex, providing for stable MR1 pools ready for metabolite antigen processing. TAPBPL interacts with MR1 in a ligand-independent way; this interaction may stabilize MR1 pool and facilitate ligand loading and dissociation. Structurally, MR1-B2M heterodimer adopts a topology similar to classical MHC class I molecules, with alpha-1 and alpha-2 domains of MR1 forming the antigen-binding cleft composed of two alpha-helices resting on a floor of 7-stranded anti-parallel beta-pleated sheet. MR1-B2M heterodimer (via alpha-helices) interacts with TCR (via CDR domains). N-glycosylated.

It is found in the cell membrane. Its subcellular location is the endoplasmic reticulum membrane. The protein resides in the golgi apparatus membrane. The protein localises to the early endosome membrane. It localises to the late endosome membrane. In terms of biological role, antigen-presenting molecule specialized in displaying microbial pyrimidine-based metabolites to alpha-beta T cell receptors (TCR) on innate-type mucosal-associated invariant T (MAIT) cells. In complex with B2M preferentially presents riboflavin-derived metabolites to semi-invariant TCRs on MAIT cells, guiding immune surveillance of the microbial metabolome at mucosal epithelial barriers. Signature pyrimidine-based microbial antigens are generated via non-enzymatic condensation of metabolite intermediates of the riboflavin pathway with by-products arising from other metabolic pathways such as glycolysis. Typical potent antigenic metabolites are 5-(2-oxoethylideneamino)-6-D-ribitylaminouracil (5-OE-RU) and 5-(2-oxopropylideneamino)-6-D-ribitylaminouracil (5-OP-RU), products of condensation of 5-amino-6-D-ribityaminouracil (5-A-RU) with glyoxal or methylglyoxal by-products, respectively. May present microbial antigens to various MAIT cell subsets, providing for unique recognition of diverse microbes, including pathogens that do not synthesize riboflavin. Upon antigen recognition, elicits rapid innate-type MAIT cell activation to eliminate pathogenic microbes by directly killing infected cells. During T cell development, drives thymic selection and post-thymic terminal differentiation of MAIT cells in a process dependent on commensal microflora. Acts as an immune sensor of cancer cell metabolome. May present a tumor-specific or -associated metabolite essential for cancer cell survival to a pan-cancer TCR on a non-MAIT CD8-positive T cell clone, triggering T cell-mediated killing of a wide range of cancer cell types. May present tumor-enriched pyridoxal and pyridoxal 5'-phosphate antigens, enabling preferential recognition of cancer cells. Presents nucleobase carbonyl adducts generated during oxidative stress. Captures M3Ade, a nucleobase adduct composed of one adenine modified by a malondialdehyde trimer, for recognition by MR1-restricted T cell clones expressing a polyclonal TCR repertoire. The polypeptide is Major histocompatibility complex class I-related protein 1 (Pan troglodytes (Chimpanzee)).